Consider the following 165-residue polypeptide: Small histone ubiquitination factor 1 (165 aa).

The segment covering 1–17 (MSSRRNDYHYDGNDHQY) has biased composition (basic and acidic residues). Positions 1 to 86 (MSSRRNDYHY…STRASFGAAS (86 aa)) are disordered. Low complexity-rich tracts occupy residues 29-38 (SFYESSYRSR) and 50-60 (SSYDSPSSSTN). A compositionally biased stretch (polar residues) spans 73–86 (PSNNSTRASFGAAS).

Component of the histone H2B ubiquitin ligase complex (HULC) composed of at least brl1, brl2, rhp6 and shf1.

It localises to the nucleus. The protein resides in the cytoplasm. The protein localises to the cytoskeleton. Its subcellular location is the microtubule organizing center. It is found in the spindle pole body. Functionally, component of the histone H2B ubiquitin ligase complex (HULC) which plays a role in transcription regulation by catalyzing the monoubiquitination of histone H2B to form H2BK123ub1. H2BK123ub1 gives a specific tag for epigenetic transcriptional activation and is also a prerequisite for H3K4me and H3K79me formation. This chain is Small histone ubiquitination factor 1 (shf1), found in Schizosaccharomyces pombe (strain 972 / ATCC 24843) (Fission yeast).